The following is a 217-amino-acid chain: NADPH-dependent 3-demethoxyubiquinone 3-hydroxylase, mitochondrial (217 aa).

Residues 1–35 constitute a mitochondrion transit peptide; sequence MSCAGAAAAPRLWRLRPGARRSLSAYGRRTSVRFR. Positions 11–29 are required for nuclear localization; sequence RLWRLRPGARRSLSAYGRR. 2 consecutive repeat copies span residues 48-129 and 130-217. The segment at 48–217 is 2 X approximate tandem repeats; it reads AVDRIIRVDH…RVAIYLSERL (170 aa). R51 is a binding site for NADH. Fe cation-binding residues include E60, E90, H93, E142, E178, and H181. 2 residues coordinate NADH: Y212 and R216.

Belongs to the COQ7 family. As to quaternary structure, component of a multi-subunit COQ enzyme complex. Interacts with COQ8B and COQ6. Interacts with COQ9. Requires Fe cation as cofactor. In terms of tissue distribution, expressed dominantly in heart and skeletal muscle.

It is found in the mitochondrion inner membrane. The protein localises to the mitochondrion. The protein resides in the nucleus. It localises to the chromosome. It catalyses the reaction a 5-methoxy-2-methyl-3-(all-trans-polyprenyl)benzoquinone + NADH + O2 = a 3-demethylubiquinone + NAD(+) + H2O. It participates in cofactor biosynthesis; ubiquinone biosynthesis. Its function is as follows. Catalyzes the hydroxylation of the 5-methoxy-2-methyl-3-(all-trans-polyprenyl)benzoquinone at the C6 position and participates in the biosynthesis of ubiquinone. Catalyzes the reaction through a substrate-mediated reduction pathway, whereby NADH shuttles electrons to 5-methoxy-2-methyl-3-(all-trans-decaprenyl)benzoquinone, which then transfers the electrons to the two Fe(3+) centers. The binding of 5-methoxy-2-methyl-3-(all-trans-polyprenyl)benzoquinone (DMQn) mediates reduction of the diiron center by nicotinamide adenine dinucleotide (NADH) and initiates oxygen activation for subsequent DMQ hydroxylation. The physiological substrates are 5-methoxy-2-methyl-3-(all-trans-nonaprenyl)benzoquinone (DMQ(9)) and 5-methoxy-2-methyl-3-(all-trans-decaprenyl)benzoquinone (DMQ(10)), however in vitro the enzyme does not have any specificity concerning the length of the polyprenyl tail, and accepts tails of various lengths with similar efficiency. Also has a structural role in the COQ enzyme complex, stabilizing other COQ polypeptides. Involved in lifespan determination in a ubiquinone-independent manner. Plays a role in modulating mitochondrial stress responses, acting in the nucleus, perhaps via regulating gene expression, independent of its characterized mitochondrial function in ubiquinone biosynthesis. The protein is NADPH-dependent 3-demethoxyubiquinone 3-hydroxylase, mitochondrial of Homo sapiens (Human).